A 245-amino-acid chain; its full sequence is Eukaryotic translation initiation factor 6 (245 aa).

Ser174 and Ser175 each carry phosphoserine; by CK1.

The protein belongs to the eIF-6 family. As to quaternary structure, monomer. Associates with the 60S ribosomal subunit. In terms of processing, phosphorylation at Ser-174 and Ser-175 promotes nuclear export.

It localises to the cytoplasm. It is found in the nucleus. The protein resides in the nucleolus. Binds to the 60S ribosomal subunit and prevents its association with the 40S ribosomal subunit to form the 80S initiation complex in the cytoplasm. Is also involved in ribosome biogenesis. Associates with pre-60S subunits in the nucleus and is involved in its nuclear export. This is Eukaryotic translation initiation factor 6 from Candida albicans (strain SC5314 / ATCC MYA-2876) (Yeast).